The following is a 355-amino-acid chain: Zinc finger protein CONSTANS-LIKE 5 (355 aa).

Residues cysteine 22, cysteine 25, cysteine 45, histidine 50, cysteine 61, cysteine 64, cysteine 84, and histidine 89 each coordinate Zn(2+). A B box-type 1; atypical zinc finger spans residues 22–60; it reads CDACKSVTAAVFCRVDSAFLCIACDTRIHSFTRHERVWV. A B box-type 2; atypical zinc finger spans residues 61–103; sequence CEVCEQAPAAVTCKADAAALCVSCDADIHSANPLASRHERVPV. A CCT domain is found at 285 to 327; that stretch reads REARVLRYREKRKNRKFEKTIRYASRKAYAESRPRIKGRFAKR.

The protein belongs to the CONSTANS family.

Its subcellular location is the nucleus. The protein is Zinc finger protein CONSTANS-LIKE 5 (COL5) of Arabidopsis thaliana (Mouse-ear cress).